The following is a 151-amino-acid chain: Cysteine proteinase inhibitor 10 (151 aa).

The signal sequence occupies residues 1 to 22; it reads MATSPMLFLVSLLLVLVAAATG. The 70-residue stretch at 40 to 109 folds into the Cystatin domain; that stretch reads GGRTEIRDVG…GVAYYLKVAA (70 aa). The Secondary area of contact motif lies at 96-100; sequence QVVSG.

It belongs to the cystatin family. Phytocystatin subfamily.

It is found in the secreted. Specific inhibitor of cysteine proteinases. Probably involved in the regulation of endogenous processes and in defense against pests and pathogens. The sequence is that of Cysteine proteinase inhibitor 10 from Oryza sativa subsp. indica (Rice).